Here is a 439-residue protein sequence, read N- to C-terminus: SH3 domain-containing protein 1 (439 aa).

In terms of domain architecture, BAR spans 32–263 (DAVVVDEEEL…MIAEEEAIGS (232 aa)). Polar residues predominate over residues 277-291 (SLPQQEPNSNSSGEI). The segment at 277–362 (SLPQQEPNSN…SDDHHNHQLL (86 aa)) is disordered. The span at 318–358 (SPKDEMKSSPQEETKSNHQKEIKSSPQEEIKKSNGSDDHHN) shows a compositional bias: basic and acidic residues. Positions 366 to 425 (DSYFLAKVVHPFDAQAPGELSLAVDDYVIVRQVAGTGWSEGEYKGKAGWFPSAYVEKQEK) constitute an SH3 domain.

Interacts with the auxilin-like protein AUXI1. Highly expressed in flowers. Detected in seedlings, roots, leaves and stems.

It localises to the cytoplasmic vesicle. The protein resides in the clathrin-coated vesicle. It is found in the cell membrane. Its subcellular location is the golgi apparatus. The protein localises to the trans-Golgi network. It localises to the endoplasmic reticulum. Functionally, lipid binding protein bound strongly to phosphatidic acid, phosphatidylinositol-4-phosphate and phosphatidylinositol-4,5-bisphosphate. Binds actin in vitro. Involved in trafficking and modification of clathrin-coated vesicles. The polypeptide is SH3 domain-containing protein 1 (SH3P1) (Arabidopsis thaliana (Mouse-ear cress)).